The following is a 948-amino-acid chain: Protocadherin alpha-10 (948 aa).

Residues 1 to 28 (MVSRCSCLGVQCLLLSLLLLAAWEVGSG) form the signal peptide. 6 Cadherin domains span residues 29 to 132 (QLHY…PPRF), 133 to 241 (SVTE…APIF), 242 to 349 (DRPV…SPEV), 350 to 454 (IVTS…APAF), 455 to 564 (AQPE…APAL), and 587 to 689 (GHVV…APEV). Topologically, residues 29-695 (QLHYSVYEEA…APEVALVDVN (667 aa)) are extracellular. 2 N-linked (GlcNAc...) asparagine glycosylation sites follow: Asn256 and Asn264. An N-linked (GlcNAc...) asparagine glycan is attached at Asn547. The helical transmembrane segment at 696 to 716 (VYLIIAICAVSSLLVLTLLLY) threads the bilayer. Over 717–948 (TALRCSAAPT…GNSTTDNSDQ (232 aa)) the chain is Cytoplasmic. PXXP repeat units follow at residues 732–735 (PVKP), 772–775 (PSLP), 797–800 (PRQP), 830–833 (PGGP), 871–874 (PGNP), and 889–892 (PGSP). Positions 732 to 892 (PVKPTLVCSS…PDKFIIPGSP (161 aa)) are 6 X 4 AA repeats of P-X-X-P. 2 disordered regions span residues 783 to 804 (DGEDQSIGGDHSRKPRQPNPDW) and 827 to 948 (RAGP…NSDQ). Over residues 907–921 (DKSDFITFGKKEETK) the composition is skewed to basic and acidic residues.

The protein localises to the cell membrane. In terms of biological role, potential calcium-dependent cell-adhesion protein. May be involved in the establishment and maintenance of specific neuronal connections in the brain. This chain is Protocadherin alpha-10 (PCDHA10), found in Pan troglodytes (Chimpanzee).